The following is an 882-amino-acid chain: Alanine--tRNA ligase (882 aa).

Positions 574, 578, 682, and 686 each coordinate Zn(2+). The interval 853–882 is disordered; it reads GGRGGGKGALAQGGGLDPRKAREALPGLLP. Gly residues predominate over residues 854–868; the sequence is GRGGGKGALAQGGGL.

It belongs to the class-II aminoacyl-tRNA synthetase family. Zn(2+) serves as cofactor.

The protein localises to the cytoplasm. It catalyses the reaction tRNA(Ala) + L-alanine + ATP = L-alanyl-tRNA(Ala) + AMP + diphosphate. Catalyzes the attachment of alanine to tRNA(Ala) in a two-step reaction: alanine is first activated by ATP to form Ala-AMP and then transferred to the acceptor end of tRNA(Ala). Also edits incorrectly charged Ser-tRNA(Ala) and Gly-tRNA(Ala) via its editing domain. The protein is Alanine--tRNA ligase of Thermus thermophilus (strain ATCC BAA-163 / DSM 7039 / HB27).